Here is a 422-residue protein sequence, read N- to C-terminus: Serine--tRNA ligase (422 aa).

Residue 231-233 coordinates L-serine; the sequence is TGE. Residue 262–264 participates in ATP binding; it reads RQE. Residue E285 participates in L-serine binding. ATP is bound at residue 349-352; the sequence is EISS. L-serine is bound at residue S384.

This sequence belongs to the class-II aminoacyl-tRNA synthetase family. Type-1 seryl-tRNA synthetase subfamily. Homodimer. The tRNA molecule binds across the dimer.

The protein resides in the cytoplasm. The enzyme catalyses tRNA(Ser) + L-serine + ATP = L-seryl-tRNA(Ser) + AMP + diphosphate + H(+). It catalyses the reaction tRNA(Sec) + L-serine + ATP = L-seryl-tRNA(Sec) + AMP + diphosphate + H(+). It functions in the pathway aminoacyl-tRNA biosynthesis; selenocysteinyl-tRNA(Sec) biosynthesis; L-seryl-tRNA(Sec) from L-serine and tRNA(Sec): step 1/1. Functionally, catalyzes the attachment of serine to tRNA(Ser). Is also able to aminoacylate tRNA(Sec) with serine, to form the misacylated tRNA L-seryl-tRNA(Sec), which will be further converted into selenocysteinyl-tRNA(Sec). The sequence is that of Serine--tRNA ligase from Mesoplasma florum (strain ATCC 33453 / NBRC 100688 / NCTC 11704 / L1) (Acholeplasma florum).